The sequence spans 365 residues: MFEINPVKNRIQDLSDRTAVLRGYLDYDAKKERLEEVNAELEQPDVWNEPERAQALGKERSTLEEIVTTIDQLEQGLEDVSGLLELAVEADDEETFNETIAELEVLDGKLGQLEFRRMFSGEYDRANCYLDLQAGSGGTEAQDWASMLLRMYLRWAESRGFKTEIIEESDGDVAGLKSATVKIIGEYAFGWLRTETGVHRLVRKSPFDSGGRRHTSFSSAFVYPEVDDDIDIEINPADLRIDVYRASGAGGQHVNKTESAVRITHIPTNIVTQCQNDRSQHKNKDQAMKQLKAKLYEFEMQKKNADKQVLEDNKSDIGWGSQIRSYVLDDSRIKDLRTGVETRNTQAVLDGDLDKFIEASLKAGL.

Q252 bears the N5-methylglutamine mark.

It belongs to the prokaryotic/mitochondrial release factor family. Methylated by PrmC. Methylation increases the termination efficiency of RF2.

It is found in the cytoplasm. Peptide chain release factor 2 directs the termination of translation in response to the peptide chain termination codons UGA and UAA. The protein is Peptide chain release factor 2 of Yersinia pseudotuberculosis serotype O:1b (strain IP 31758).